Consider the following 249-residue polypeptide: uncharacterized protein (249 aa).

Helical transmembrane passes span 49–69 (ILLS…CYLL) and 223–243 (IVMS…VHHL).

Its subcellular location is the cell membrane. This is an uncharacterized protein from Bacillus anthracis.